The following is a 308-amino-acid chain: Probable very-long-chain enoyl-CoA reductase art-1 (308 aa).

A Ubiquitin-like domain is found at 7–85; that stretch reads VYDAKRTDNL…VLYVRDLGPQ (79 aa). Transmembrane regions (helical) follow at residues 112-132, 169-189, 194-214, and 255-275; these read FIYG…IAFF, WGFA…PPAF, VYFG…IHIL, and WIFF…TAGF.

This sequence belongs to the steroid 5-alpha reductase family.

It localises to the endoplasmic reticulum membrane. It catalyses the reaction a very-long-chain 2,3-saturated fatty acyl-CoA + NADP(+) = a very-long-chain (2E)-enoyl-CoA + NADPH + H(+). It participates in lipid metabolism; fatty acid biosynthesis. In terms of biological role, catalyzes the last of the four reactions of the long-chain fatty acids elongation cycle. This endoplasmic reticulum-bound enzymatic process, allows the addition of 2 carbons to the chain of long- and very long-chain fatty acids/VLCFAs per cycle. This enzyme reduces the trans-2,3-enoyl-CoA fatty acid intermediate to an acyl-CoA that can be further elongated by entering a new cycle of elongation. Thereby, it participates in the production of VLCFAs of different chain lengths that are involved in multiple biological processes as precursors of membrane lipids and lipid mediators. The sequence is that of Probable very-long-chain enoyl-CoA reductase art-1 (art-1) from Caenorhabditis elegans.